A 716-amino-acid chain; its full sequence is Tensin-4 (716 aa).

An N-terminal signal peptide occupies residues 1–17 (MSQVMSSPLLAGGPAVG). Disordered stretches follow at residues 119–274 (LPPG…VSML), 301–322 (QSSS…NLGP), 334–366 (VPSN…PSIT), and 379–436 (GFPE…RDMQ). The span at 138 to 150 (KKKEEPEALDIKY) shows a compositional bias: basic and acidic residues. The span at 197 to 206 (SSESLIFSGS) shows a compositional bias: polar residues. Pro residues predominate over residues 214–228 (PAPPSAVPSSHPPTS). Position 248 is a phosphoserine (Ser-248). Residues 265–274 (PQLSSRVSML) show a composition bias toward polar residues. A compositionally biased stretch (polar residues) spans 402-419 (ATSSSMPCPATRSHSQTL). The region spanning 449–556 (WFKPSISREQ…ALPCKLVIPQ (108 aa)) is the SH2 domain. One can recognise a PTB domain in the interval 583 to 704 (CHALYLSSVS…TLQPASQVIR (122 aa)).

The protein belongs to the PTEN phosphatase protein family. Interacts (via SH2 domain) with Rho GTPase-activating protein DLC1 (via C-terminus); the interaction is independent of DLC1 tyrosine phosphorylation. Interacts with integrin ITGB1; the interaction displaces tensin TNS3 from the ITGB1 cytoplasmic tail and promotes ITGB1 stability. Interacts (via SH2 domain) with E3 ubiquitin-protein ligase CBL (phosphorylated on 'Tyr-782'); the interaction is enhanced in the presence of EGF and reduces interaction of CBL with EGFR. Interacts (via SH2 domain) with receptor tyrosine kinase MET (when phosphorylated); the interaction increases MET protein stability.

The protein localises to the cell junction. Its subcellular location is the focal adhesion. It localises to the cytoplasm. The protein resides in the cytoskeleton. Functionally, promotes EGF-induced cell migration by displacing tensin TNS3 from the cytoplasmic tail of integrin ITGB1 which results in dissociation of TNS3 from focal adhesions, disassembly of actin stress fibers and initiation of cell migration. Suppresses ligand-induced degradation of EGFR by reducing EGFR ubiquitination in the presence of EGF. Increases MET protein stability by inhibiting MET endocytosis and subsequent lysosomal degradation which leads to increased cell survival, proliferation and migration. The polypeptide is Tensin-4 (TNS4) (Bos taurus (Bovine)).